Here is an 83-residue protein sequence, read N- to C-terminus: Kappa-ctenitoxin-Pn1a (83 aa).

Residues 1–21 form the signal peptide; that stretch reads MWFKIQVLVLAITLITLGIQA. Positions 22-37 are excised as a propeptide; it reads EPNSSPNNPLIVEEDR. Disulfide bonds link C40–C55, C47–C60, C54–C71, and C62–C69. A propeptide spanning residues 78–83 is cleaved from the precursor; that stretch reads LFGFGK.

This sequence belongs to the neurotoxin 02 (plectoxin) family. In terms of tissue distribution, expressed by the venom gland.

The protein resides in the secreted. Functionally, antagonist of L-type calcium channels (Cav1/CACNA1). In GH3 neuroendocrinal cell line, it reversibly inhibits the A-type potassium current but does not block other potassium currents or calcium channels. Shows an important acetylcholine-mediated antiarrhythmogenic effect in isolated hearts. In vivo, causes paralysis in the posterior limbs and gradual decreases in movement and aggression during 24 hours at dose levels of 5 ug per mouse. The polypeptide is Kappa-ctenitoxin-Pn1a (Phoneutria nigriventer (Brazilian armed spider)).